A 323-amino-acid chain; its full sequence is tRNA-modifying protein YgfZ (323 aa).

Folate is bound by residues Trp-29 and Trp-182.

It belongs to the tRNA-modifying YgfZ family.

The protein localises to the cytoplasm. In terms of biological role, folate-binding protein involved in regulating the level of ATP-DnaA and in the modification of some tRNAs. It is probably a key factor in regulatory networks that act via tRNA modification, such as initiation of chromosomal replication. In Vibrio cholerae serotype O1 (strain ATCC 39541 / Classical Ogawa 395 / O395), this protein is tRNA-modifying protein YgfZ.